The sequence spans 234 residues: MQLITTENKLAGSKKALEIIEKGITSGEVNTLGLATGSTPETLYAELVKSDVDTKNVTTTNLDEYVGLAASDPNSYHYYMNDLLFSKKAFKESFLPNGEATDAEAECARYEEILSEHPIDIQVLGIGTNGHIGFNEPGTSFDSITHKVVLTDSTREANKRFFEREEDVPTHAYSMGIKSIMNAKKIILLAFGENKAQAIKETIKGPVDVNCPASVLQNHPDVTVILDNEAASLL.

Aspartate 63 functions as the Proton acceptor; for enolization step in the catalytic mechanism. The active-site For ring-opening step is the asparagine 129. The active-site Proton acceptor; for ring-opening step is histidine 131. The active-site For ring-opening step is glutamate 136.

Belongs to the glucosamine/galactosamine-6-phosphate isomerase family. NagB subfamily.

The enzyme catalyses alpha-D-glucosamine 6-phosphate + H2O = beta-D-fructose 6-phosphate + NH4(+). It participates in amino-sugar metabolism; N-acetylneuraminate degradation; D-fructose 6-phosphate from N-acetylneuraminate: step 5/5. Functionally, catalyzes the reversible isomerization-deamination of glucosamine 6-phosphate (GlcN6P) to form fructose 6-phosphate (Fru6P) and ammonium ion. In Listeria monocytogenes serovar 1/2a (strain ATCC BAA-679 / EGD-e), this protein is Glucosamine-6-phosphate deaminase.